The chain runs to 850 residues: Polyhomeotic-like protein 2 (850 aa).

Disordered stretches follow at residues 1–79 (MENE…QYLQ), 233–314 (QQTP…RAVP), 335–386 (LPQP…DHAL), 402–436 (THVH…PPQR), and 528–553 (MTSG…KPPQ). A compositionally biased stretch (low complexity) spans 15-32 (SVTTNTSGTNSSSGCISS). Residues 33–56 (SGGGGGSGGRPTAPQISVYSGIPD) are interaction with BMI1. Residues 343–352 (PQPQFVAQQQ) show a composition bias toward low complexity. 2 stretches are compositionally biased toward polar residues: residues 368-380 (LASV…LQSS) and 402-425 (THVH…SQNG). Over residues 529 to 543 (TSGNGNSASSIAGTA) the composition is skewed to low complexity. Positions 550–579 (KPPQAIVKPQILTHVIEGFVIQEGAEPFPV) match the HD1 motif. Glycyl lysine isopeptide (Lys-Gly) (interchain with G-Cter in SUMO2) cross-links involve residues Lys590 and Lys592. Positions 597-624 (FLPEKPPQQDHTTTTDSEMEEPYLQESK) are disordered. Residue Thr611 is modified to Phosphothreonine. At Ser613 the chain carries Phosphoserine. Residue Lys624 forms a Glycyl lysine isopeptide (Lys-Gly) (interchain with G-Cter in SUMO2) linkage. The segment at 625 to 659 (EEGTPLKLKCELCGRVDFAYKFKRSKRFCSMACAK) adopts an FCS-type zinc-finger fold. Zn(2+)-binding residues include Cys634, Cys637, Cys653, and Cys657. 2 disordered regions span residues 676 to 712 (RSKL…SGTV) and 725 to 764 (SQED…LDLP). Residue Lys694 forms a Glycyl lysine isopeptide (Lys-Gly) (interchain with G-Cter in SUMO2) linkage. The segment covering 696–712 (SLPTLTKDTKKQPSGTV) has biased composition (polar residues). Phosphoserine is present on Ser743. The 65-residue stretch at 786–850 (WNVEDVYEFI…YARISMLKDS (65 aa)) folds into the SAM domain. Lys839 participates in a covalent cross-link: Glycyl lysine isopeptide (Lys-Gly) (interchain with G-Cter in SUMO2).

Component of a PRC1-like complex. Interacts with CBX4. Interacts with BMI1, PCGF2, PHC1 and RNF2. Interacts with CHTOP. Interacts with the N-terminal region of the SP1 transcription factor and with MAPKAPK2. Interacts with SAMD7. Interacts with SAMD11. As to expression, isoform 2 is ubiquitously expressed in embryos and adult tissues at much higher level than isoform 1.

It localises to the nucleus. Its function is as follows. Component of a Polycomb group (PcG) multiprotein PRC1-like complex, a complex class required to maintain the transcriptionally repressive state of many genes, including Hox genes, throughout development. PcG PRC1 complex acts via chromatin remodeling and modification of histones; it mediates monoubiquitination of histone H2A 'Lys-119', rendering chromatin heritably changed in its expressibility. The polypeptide is Polyhomeotic-like protein 2 (Phc2) (Mus musculus (Mouse)).